The sequence spans 151 residues: Transcriptional repressor NrdR (151 aa).

A zinc finger lies at 3–34 (CPYCGYIEDRVIDSRPTDEGSAIRRRRECSKC). The ATP-cone domain maps to 49 to 139 (IMVIKKDKSR…VYRQFKDINT (91 aa)).

This sequence belongs to the NrdR family. Requires Zn(2+) as cofactor.

Functionally, negatively regulates transcription of bacterial ribonucleotide reductase nrd genes and operons by binding to NrdR-boxes. In Acetivibrio thermocellus (strain ATCC 27405 / DSM 1237 / JCM 9322 / NBRC 103400 / NCIMB 10682 / NRRL B-4536 / VPI 7372) (Clostridium thermocellum), this protein is Transcriptional repressor NrdR.